The following is a 247-amino-acid chain: PsbP domain-containing protein 3, chloroplastic (247 aa).

The transit peptide at 1–26 directs the protein to the chloroplast; it reads MAAISPWLSSPQSFSNPRVTITDSRR. The transit peptide at 27 to 80 directs the protein to the thylakoid; sequence CSSISAAISVLDSSNEEQHRISSRDHVGMKRRDVMLQIASSVFFLPLAISPAFA.

Belongs to the PsbP family.

It localises to the plastid. The protein resides in the chloroplast thylakoid lumen. The polypeptide is PsbP domain-containing protein 3, chloroplastic (PPD3) (Arabidopsis thaliana (Mouse-ear cress)).